The sequence spans 217 residues: ATP-dependent Clp protease proteolytic subunit (217 aa).

Catalysis depends on Ser119, which acts as the Nucleophile. His144 is a catalytic residue.

It belongs to the peptidase S14 family. Fourteen ClpP subunits assemble into 2 heptameric rings which stack back to back to give a disk-like structure with a central cavity, resembling the structure of eukaryotic proteasomes.

It is found in the cytoplasm. It carries out the reaction Hydrolysis of proteins to small peptides in the presence of ATP and magnesium. alpha-casein is the usual test substrate. In the absence of ATP, only oligopeptides shorter than five residues are hydrolyzed (such as succinyl-Leu-Tyr-|-NHMec, and Leu-Tyr-Leu-|-Tyr-Trp, in which cleavage of the -Tyr-|-Leu- and -Tyr-|-Trp bonds also occurs).. Its function is as follows. Cleaves peptides in various proteins in a process that requires ATP hydrolysis. Has a chymotrypsin-like activity. Plays a major role in the degradation of misfolded proteins. The polypeptide is ATP-dependent Clp protease proteolytic subunit (Bordetella petrii (strain ATCC BAA-461 / DSM 12804 / CCUG 43448)).